The following is a 189-amino-acid chain: UPF0301 protein PFLU_5755 (189 aa).

Belongs to the UPF0301 (AlgH) family.

This is UPF0301 protein PFLU_5755 from Pseudomonas fluorescens (strain SBW25).